A 1104-amino-acid chain; its full sequence is DNA polymerase delta catalytic subunit (1104 aa).

The interval 1 to 60 is disordered; it reads MKRSIVTGGGNNDKKFKAQPPPKNNYRGGGDDEEDDEFEEDDDEDEGDEFGEEEDEDDID. The segment covering 31–60 has biased composition (acidic residues); it reads DDEEDDEFEEDDDEDEGDEFGEEEDEDDID. Cys-1012, Cys-1015, Cys-1027, and Cys-1030 together coordinate Zn(2+). A CysA-type zinc finger spans residues 1012-1030; sequence CMNCPKELTDTESTTCINC. [4Fe-4S] cluster-binding residues include Cys-1059, Cys-1062, Cys-1072, and Cys-1077. The CysB motif signature appears at 1059 to 1077; it reads CQRCSGSLHQPVLCSNRDC.

This sequence belongs to the DNA polymerase type-B family. In terms of assembly, heterotetramer composed of subunits of 125 kDa, 50 kDa, 66 kDa and 12 kDa. The 125 kDa subunit contains the polymerase active site and most likely the active site for the 3'-5' exonuclease activity. It depends on [4Fe-4S] cluster as a cofactor.

It is found in the nucleus. The enzyme catalyses DNA(n) + a 2'-deoxyribonucleoside 5'-triphosphate = DNA(n+1) + diphosphate. Functionally, possesses two enzymatic activities: DNA synthesis (polymerase) and an exonucleolytic activity that degrades single stranded DNA in the 3'- to 5'-direction. The sequence is that of DNA polymerase delta catalytic subunit (pold1) from Dictyostelium discoideum (Social amoeba).